The sequence spans 151 residues: Small ribosomal subunit protein uS9 (151 aa).

The span at 1-19 (MTETTPAPQTPAAPAGPAQ) shows a compositional bias: low complexity. Disordered regions lie at residues 1-20 (MTET…PAQS) and 121-151 (KAGF…YSKR). A compositionally biased stretch (basic and acidic residues) spans 127–136 (RDPRATERKK). The span at 137–151 (YGLKKARKAPQYSKR) shows a compositional bias: basic residues.

This sequence belongs to the universal ribosomal protein uS9 family.

This chain is Small ribosomal subunit protein uS9 (rpsI), found in Mycobacterium bovis (strain ATCC BAA-935 / AF2122/97).